A 53-amino-acid chain; its full sequence is Conotoxin Bu27 (53 aa).

Residues 1–12 (ASDGRNAVVHER) constitute a propeptide that is removed on maturation. A 4-hydroxyproline modification is found at Pro-14. Glu-15 is modified (4-carboxyglutamate). O-linked (HexNAc...) threonine glycosylation is found at Thr-19 and Thr-21. 4-hydroxyproline occurs at positions 29, 34, 35, 43, 44, and 48. Pro-48 is modified (proline amide). Positions 49-53 (GRRND) are excised as a propeptide.

Belongs to the conotoxin A superfamily. Post-translationally, contains 3 disulfide bonds. As to expression, expressed by the venom duct.

The protein resides in the secreted. Probable neurotoxin with ion channel inhibitor activity. The sequence is that of Conotoxin Bu27 from Conus bullatus (Bubble cone).